The chain runs to 132 residues: Transcription antitermination protein NusB (132 aa).

This sequence belongs to the NusB family.

Involved in transcription antitermination. Required for transcription of ribosomal RNA (rRNA) genes. Binds specifically to the boxA antiterminator sequence of the ribosomal RNA (rrn) operons. This is Transcription antitermination protein NusB from Campylobacter jejuni subsp. doylei (strain ATCC BAA-1458 / RM4099 / 269.97).